The following is a 75-amino-acid chain: Pi-hexatoxin-Hi1b (75 aa).

Disulfide bonds link Cys-3-Cys-18, Cys-10-Cys-23, Cys-17-Cys-33, Cys-40-Cys-55, Cys-47-Cys-60, and Cys-54-Cys-71. Domain repeat units follow at residues 3–33 and 40–71; these read CIRK…FEVC and CLVK…SSVC. Residues 3–71 form a 2 X approximate repeats with cysteine pattern C-C-CC-C-C region; the sequence is CIRKWLSCVD…KRSGNKSSVC (69 aa).

This sequence belongs to the psalmotoxin-1 family. Double-knot toxin subfamily. As to expression, expressed by the venom gland.

It is found in the secreted. Its function is as follows. This toxin potently and selectively inhibits ASIC1a, an isoform of the gene ASIC1. It incompletely inhibits ASIC1a activation in a pH-independent and slowly reversible manner. This toxin acts by binding to and stabilizing the closed state of the channel, thereby impeding the transition into a conducting state. This toxin may bind to the acidic pocket of ASIC1a, since mutation of a key residue of this pocket (Arg-350) abolishes the ability of the toxin to inhibit ASIC1a. In vivo, this toxin protects the brain from neuronal injury when administered up to 8 hours after stroke onset. This Hadronyche infensa (Fraser island funnel-web spider) protein is Pi-hexatoxin-Hi1b.